The chain runs to 1087 residues: Ubiquitin-associated protein 2-like (1087 aa).

Methionine 1 carries the N-acetylmethionine modification. Residues 1 to 33 form a disordered region; that stretch reads MMTSVGTNRARGNWEQPQNQNQTQHKQRPQATA. The UBA domain maps to 49 to 89; sequence DFEEKVKQLIDITGKNQDECVIALHDCNGDVNRAINVLLEG. The tract at residues 92 to 234 is disordered; sequence DTHSWEMVGK…TGHFEPDDGT (143 aa). Over residues 118 to 132 the composition is skewed to basic and acidic residues; the sequence is EEGKENRDRDRDYSR. A compositionally biased stretch (basic residues) spans 133–145; that stretch reads RRGGPPRRGRGAS. Arginine 187 and arginine 190 each carry asymmetric dimethylarginine. Residues 213-226 show a composition bias toward low complexity; that stretch reads NYGNSSGNTWNNTG. A phosphoserine mark is found at serine 356 and serine 360. The segment covering 377–389 has biased composition (low complexity); the sequence is AQHSQSGSTTTSS. A disordered region spans residues 377–420; sequence AQHSQSGSTTTSSWDMGSTTQSPSLVQYDLKNPSDSAVHSPFTK. The segment covering 390–401 has biased composition (polar residues); it reads WDMGSTTQSPSL. Phosphoserine is present on residues serine 410 and serine 416. The residue at position 425 (threonine 425) is a Phosphothreonine. A phosphoserine mark is found at serine 439, serine 454, serine 467, serine 470, serine 471, and serine 477. Disordered stretches follow at residues 440 to 493, 530 to 656, and 669 to 794; these read PAVA…KKAS, SDYE…IPPL, and TNQH…LPPG. Composition is skewed to low complexity over residues 474–485 and 534–569; these read QSSSPQPAQQKL and STPTTSASSSQAPSSLYTSTASESSSTISSNQSQES. Residues 570-656 show a composition bias toward polar residues; it reads GYQSGPIQST…SPSTSSIPPL (87 aa). Serine 604, serine 605, serine 608, and serine 609 each carry phosphoserine. Over residues 688–784 the composition is skewed to low complexity; sequence TTTTQHSSTL…STRSSVATTS (97 aa). Residues serine 852 and serine 859 each carry the phosphoserine modification. The disordered stretch occupies residues 865-901; it reads FGRGDASSPAPATTLAQPQQNQTQTHHTTQQTFLNPA. Residues 873-896 are compositionally biased toward low complexity; the sequence is PAPATTLAQPQQNQTQTHHTTQQT. Serine 962 and valine 969 each carry omega-N-methylarginine. 2 positions are modified to N6-acetyllysine: valine 969 and threonine 976. Residues 1040–1087 are disordered; sequence QQPHSQILHHHLQQDGQTGSGQRSQTSSIPQKPQTNKSAYNSYSWGAN. The span at 1053-1067 shows a compositional bias: low complexity; sequence QDGQTGSGQRSQTSS. Polar residues predominate over residues 1068–1087; it reads IPQKPQTNKSAYNSYSWGAN.

As to quaternary structure, interacts with BMI1. Part of a complex consisting of UBAP2L, BMI1 and RNF2. Interacts with G3BP1 (via NTF2 domain); promoting stress granule formation. Acetylated. Ubiquitous.

Its subcellular location is the nucleus. The protein resides in the chromosome. The protein localises to the cytoplasm. It localises to the stress granule. In terms of biological role, recruits the ubiquitination machinery to RNA polymerase II for polyubiquitination, removal and degradation, when the transcription-coupled nucleotide excision repair (TC-NER) machinery fails to resolve DNA damage. Plays an important role in the activity of long-term repopulating hematopoietic stem cells (LT-HSCs). Is a regulator of stress granule assembly, required for their efficient formation. Required for proper brain development and neocortex lamination. In Homo sapiens (Human), this protein is Ubiquitin-associated protein 2-like.